We begin with the raw amino-acid sequence, 67 residues long: DNA-directed RNA polymerase subunit omega (67 aa).

This sequence belongs to the RNA polymerase subunit omega family. In terms of assembly, the RNAP catalytic core consists of 2 alpha, 1 beta, 1 beta' and 1 omega subunit. When a sigma factor is associated with the core the holoenzyme is formed, which can initiate transcription.

The catalysed reaction is RNA(n) + a ribonucleoside 5'-triphosphate = RNA(n+1) + diphosphate. Its function is as follows. Promotes RNA polymerase assembly. Latches the N- and C-terminal regions of the beta' subunit thereby facilitating its interaction with the beta and alpha subunits. In Polaromonas naphthalenivorans (strain CJ2), this protein is DNA-directed RNA polymerase subunit omega.